Reading from the N-terminus, the 1048-residue chain is NACHT, LRR and PYD domains-containing protein 8 (1048 aa).

Positions 1–23 (MSDVNPPSDTPIPFSSSSTHSSH) are disordered. The span at 11-23 (PIPFSSSSTHSSH) shows a compositional bias: low complexity. The 99-residue stretch at 33–131 (PGSPCENGVM…NAILPTLEPE (99 aa)) folds into the Pyrin domain. Residues 204–527 (KTVAIQGAPG…FYVLCFPQRL (324 aa)) enclose the NACHT domain. Residue 210 to 217 (GAPGIGKT) coordinates ATP. 5 LRR repeats span residues 815 to 838 (NGHL…YLSV), 839 to 861 (AQLE…SLAS), 866 to 890 (SKML…IWNA), 923 to 950 (NKTL…ALKN), and 980 to 1007 (NQHL…AFSS). Residues 1029–1048 (PTPHPPDFTGKSDCLSQINP) are disordered.

It belongs to the NLRP family.

The protein resides in the cytoplasm. Involved in inflammation. The protein is NACHT, LRR and PYD domains-containing protein 8 (NLRP8) of Homo sapiens (Human).